We begin with the raw amino-acid sequence, 1427 residues long: DNA-directed RNA polymerase subunit beta' (1427 aa).

Zn(2+)-binding residues include Cys-66, Cys-68, Cys-81, and Cys-84. Mg(2+) is bound by residues Asp-472, Asp-474, and Asp-476. Residues Cys-815, Cys-889, Cys-896, and Cys-899 each contribute to the Zn(2+) site.

It belongs to the RNA polymerase beta' chain family. In terms of assembly, the RNAP catalytic core consists of 2 alpha, 1 beta, 1 beta' and 1 omega subunit. When a sigma factor is associated with the core the holoenzyme is formed, which can initiate transcription. Requires Mg(2+) as cofactor. Zn(2+) is required as a cofactor.

The enzyme catalyses RNA(n) + a ribonucleoside 5'-triphosphate = RNA(n+1) + diphosphate. Its function is as follows. DNA-dependent RNA polymerase catalyzes the transcription of DNA into RNA using the four ribonucleoside triphosphates as substrates. In Bacteroides fragilis (strain ATCC 25285 / DSM 2151 / CCUG 4856 / JCM 11019 / LMG 10263 / NCTC 9343 / Onslow / VPI 2553 / EN-2), this protein is DNA-directed RNA polymerase subunit beta'.